Reading from the N-terminus, the 338-residue chain is Lipoyl synthase (338 aa).

The tract at residues 1–22 (MTTVQEAVPNLIPTQDVTPRPA) is disordered. [4Fe-4S] cluster contacts are provided by cysteine 84, cysteine 89, cysteine 95, cysteine 110, cysteine 114, cysteine 117, and serine 324. Residues 96-313 (FSGGTATFMI…AEEGYKMGFK (218 aa)) enclose the Radical SAM core domain.

The protein belongs to the radical SAM superfamily. Lipoyl synthase family. It depends on [4Fe-4S] cluster as a cofactor.

It localises to the cytoplasm. The enzyme catalyses [[Fe-S] cluster scaffold protein carrying a second [4Fe-4S](2+) cluster] + N(6)-octanoyl-L-lysyl-[protein] + 2 oxidized [2Fe-2S]-[ferredoxin] + 2 S-adenosyl-L-methionine + 4 H(+) = [[Fe-S] cluster scaffold protein] + N(6)-[(R)-dihydrolipoyl]-L-lysyl-[protein] + 4 Fe(3+) + 2 hydrogen sulfide + 2 5'-deoxyadenosine + 2 L-methionine + 2 reduced [2Fe-2S]-[ferredoxin]. It participates in protein modification; protein lipoylation via endogenous pathway; protein N(6)-(lipoyl)lysine from octanoyl-[acyl-carrier-protein]: step 2/2. Its function is as follows. Catalyzes the radical-mediated insertion of two sulfur atoms into the C-6 and C-8 positions of the octanoyl moiety bound to the lipoyl domains of lipoate-dependent enzymes, thereby converting the octanoylated domains into lipoylated derivatives. The protein is Lipoyl synthase of Pseudomonas entomophila (strain L48).